Consider the following 203-residue polypeptide: ATP-dependent Clp protease proteolytic subunit (203 aa).

Residue serine 100 is the Nucleophile of the active site. Histidine 125 is an active-site residue.

This sequence belongs to the peptidase S14 family. As to quaternary structure, component of the chloroplastic Clp protease core complex.

It is found in the plastid. Its subcellular location is the chloroplast stroma. The enzyme catalyses Hydrolysis of proteins to small peptides in the presence of ATP and magnesium. alpha-casein is the usual test substrate. In the absence of ATP, only oligopeptides shorter than five residues are hydrolyzed (such as succinyl-Leu-Tyr-|-NHMec, and Leu-Tyr-Leu-|-Tyr-Trp, in which cleavage of the -Tyr-|-Leu- and -Tyr-|-Trp bonds also occurs).. In terms of biological role, cleaves peptides in various proteins in a process that requires ATP hydrolysis. Has a chymotrypsin-like activity. Plays a major role in the degradation of misfolded proteins. The sequence is that of ATP-dependent Clp protease proteolytic subunit from Dioscorea elephantipes (Elephant's foot yam).